The sequence spans 95 residues: Transcription and mRNA export factor ENY2-2 (95 aa).

Belongs to the ENY2 family. Component of the nuclear pore complex (NPC)-associated TREX-2 complex (transcription and export complex 2). Component of the SAGA transcription coactivator-HAT complex. Within the SAGA complex, participates in a subcomplex of SAGA called the DUB module (deubiquitination module).

The protein resides in the nucleus. Its subcellular location is the nucleoplasm. Functionally, involved in mRNA export coupled transcription activation by association with both the TREX-2 and the SAGA complexes. The transcription regulatory histone acetylation (HAT) complex SAGA is a multiprotein complex that activates transcription by remodeling chromatin and mediating histone acetylation and deubiquitination. Within the SAGA complex, participates in a subcomplex that specifically deubiquitinates histones. The SAGA complex is recruited to specific gene promoters by activators, where it is required for transcription. The TREX-2 complex functions in docking export-competent ribonucleoprotein particles (mRNPs) to the nuclear entrance of the nuclear pore complex (nuclear basket). TREX-2 participates in mRNA export and accurate chromatin positioning in the nucleus by tethering genes to the nuclear periphery. The chain is Transcription and mRNA export factor ENY2-2 (eny2-2) from Salmo salar (Atlantic salmon).